The primary structure comprises 447 residues: Glutamyl-tRNA reductase (447 aa).

Substrate-binding positions include 45–48 (TCNR), Ser-111, 116–118 (ETE), and Gln-122. Residue Cys-46 is the Nucleophile of the active site. 191 to 196 (GTGKYA) is a binding site for NADP(+).

Belongs to the glutamyl-tRNA reductase family. As to quaternary structure, homodimer.

It carries out the reaction (S)-4-amino-5-oxopentanoate + tRNA(Glu) + NADP(+) = L-glutamyl-tRNA(Glu) + NADPH + H(+). The protein operates within porphyrin-containing compound metabolism; protoporphyrin-IX biosynthesis; 5-aminolevulinate from L-glutamyl-tRNA(Glu): step 1/2. In terms of biological role, catalyzes the NADPH-dependent reduction of glutamyl-tRNA(Glu) to glutamate 1-semialdehyde (GSA). This is Glutamyl-tRNA reductase from Tropheryma whipplei (strain Twist) (Whipple's bacillus).